Here is a 151-residue protein sequence, read N- to C-terminus: UPF0208 membrane protein PC1_2779 (151 aa).

The next 2 helical transmembrane spans lie at 46–66 and 69–89; these read FGIR…IALG and LGPA…GLWW.

It belongs to the UPF0208 family.

The protein localises to the cell inner membrane. The sequence is that of UPF0208 membrane protein PC1_2779 from Pectobacterium carotovorum subsp. carotovorum (strain PC1).